A 425-amino-acid chain; its full sequence is UPF0597 protein VFMJ11_0655 (425 aa).

This sequence belongs to the UPF0597 family.

The sequence is that of UPF0597 protein VFMJ11_0655 from Aliivibrio fischeri (strain MJ11) (Vibrio fischeri).